The chain runs to 98 residues: Capsid assembly scaffolding protein (98 aa).

A coiled-coil region spans residues Val-40–Val-62.

It belongs to the phi29likevirus scaffolding protein family. Homodimer. Interacts non-specifically with DNA; probably binds DNA in the early stages of DNA packaging.

In terms of biological role, scaffolding protein involved in the icosahedric procapsid assembly. Coassembles with the capsid proteins to form the procapsid. The scaffolding protein is found within the capsid as a serie of concentric shells. During DNA packaging, the scaffolding protein molecules are released from the procapsid. The chain is Capsid assembly scaffolding protein (7) from Bacillus subtilis (Bacteriophage phi-29).